The primary structure comprises 421 residues: Enolase 1 (421 aa).

Position 164 (glutamine 164) interacts with (2R)-2-phosphoglycerate. Residue glutamate 206 is the Proton donor of the active site. Aspartate 243, glutamate 287, and aspartate 314 together coordinate Mg(2+). (2R)-2-phosphoglycerate is bound by residues lysine 339, arginine 368, serine 369, and lysine 390. Lysine 339 serves as the catalytic Proton acceptor.

Belongs to the enolase family. Component of the RNA degradosome, a multiprotein complex involved in RNA processing and mRNA degradation. The cofactor is Mg(2+).

The protein resides in the cytoplasm. It localises to the secreted. The protein localises to the cell surface. It catalyses the reaction (2R)-2-phosphoglycerate = phosphoenolpyruvate + H2O. Its pathway is carbohydrate degradation; glycolysis; pyruvate from D-glyceraldehyde 3-phosphate: step 4/5. Its function is as follows. Catalyzes the reversible conversion of 2-phosphoglycerate (2-PG) into phosphoenolpyruvate (PEP). It is essential for the degradation of carbohydrates via glycolysis. This chain is Enolase 1, found in Methylococcus capsulatus (strain ATCC 33009 / NCIMB 11132 / Bath).